Here is a 353-residue protein sequence, read N- to C-terminus: Farnesyl pyrophosphate synthase (353 aa).

Isopentenyl diphosphate-binding residues include K57, R60, and Q96. K57 is subject to N6-(2-hydroxyisobutyryl)lysine; alternate. An N6-acetyllysine; alternate modification is found at K57. 2 residues coordinate Mg(2+): D103 and D107. Position 112 (R112) interacts with dimethylallyl diphosphate. R113 is a binding site for isopentenyl diphosphate. Residues K200, T201, Q240, K257, and K266 each coordinate dimethylallyl diphosphate.

It belongs to the FPP/GGPP synthase family. Homodimer. Interacts with RSAD2. The cofactor is Mg(2+). Testis, liver, kidney, brain and adrenal gland.

Its subcellular location is the cytoplasm. The catalysed reaction is isopentenyl diphosphate + dimethylallyl diphosphate = (2E)-geranyl diphosphate + diphosphate. It carries out the reaction isopentenyl diphosphate + (2E)-geranyl diphosphate = (2E,6E)-farnesyl diphosphate + diphosphate. Its pathway is isoprenoid biosynthesis; farnesyl diphosphate biosynthesis; farnesyl diphosphate from geranyl diphosphate and isopentenyl diphosphate: step 1/1. The protein operates within isoprenoid biosynthesis; geranyl diphosphate biosynthesis; geranyl diphosphate from dimethylallyl diphosphate and isopentenyl diphosphate: step 1/1. Its activity is regulated as follows. Inactivated by interferon-induced RSAD2. This inactivation may result of disruption of lipid rafts at the plasma membrane, and thus have an antiviral effect since many enveloped viruses need lipid rafts to bud efficiently out of the cell. Key enzyme in isoprenoid biosynthesis which catalyzes the formation of farnesyl diphosphate (FPP), a precursor for several classes of essential metabolites including sterols, dolichols, carotenoids, and ubiquinones. FPP also serves as substrate for protein farnesylation and geranylgeranylation. Catalyzes the sequential condensation of isopentenyl pyrophosphate with the allylic pyrophosphates, dimethylallyl pyrophosphate, and then with the resultant geranylpyrophosphate to the ultimate product farnesyl pyrophosphate. In Rattus norvegicus (Rat), this protein is Farnesyl pyrophosphate synthase (Fdps).